We begin with the raw amino-acid sequence, 170 residues long: Cathelicidin antimicrobial peptide (170 aa).

The signal sequence occupies residues 1–30 (MKTQRDGPSLGRWSLVLLLLGLTMPLAITA). A propeptide spans 31-131 (QVLSYQEAVL…DISCDKDERK (101 aa)) (cathelin-like domain (CLD)). 2 disulfides stabilise this stretch: Cys86–Cys97 and Cys108–Cys125. The interval 150 to 162 (FKKIGQKINDFLG) is active core.

The protein belongs to the cathelicidin family. In terms of assembly, monomer, homodimer or homotrimer (in vitro). Oligomerizes as tetra- or hexamer in solution (in vitro). In terms of processing, proteolytically cleaved by proteinase PRTN3 into antibacterial peptide LL-37. Proteolytically cleaved by cathepsin CTSG and neutrophil elastase ELANE. Post-translationally, resistant to proteolytic degradation in solution, and when bound to both zwitterionic (mimicking mammalian membranes) and negatively charged membranes (mimicking bacterial membranes). After secretion onto the skin surface, the CAMP gene product is processed by a serine protease-dependent mechanism into multiple novel antimicrobial peptides distinct from and shorter than cathelicidin LL-37. These peptides show enhanced antimicrobial action, acquiring the ability to kill skin pathogens such as S.aureus, E.coli and C.albicans. These peptides have lost the ability to stimulate CXCL8/IL8 release from keratinocytes. The peptides act synergistically, killing bacteria at lower concentrations when present together, and maintain activity at increased salt condition.

The protein localises to the secreted. It is found in the vesicle. Its function is as follows. Antimicrobial protein that is an integral component of the innate immune system. Binds to bacterial lipopolysaccharides (LPS). Acts via neutrophil N-formyl peptide receptors to enhance the release of CXCL2. Postsecretory processing generates multiple cathelicidin antimicrobial peptides with various lengths which act as a topical antimicrobial defense in sweat on skin. The unprocessed precursor form, cathelicidin antimicrobial peptide, inhibits the growth of Gram-negative E.coli and E.aerogenes with efficiencies comparable to that of the mature peptide LL-37 (in vitro). Antimicrobial peptide that is an integral component of the innate immune system. Binds to bacterial lipopolysaccharides (LPS). Causes membrane permeabilization by forming transmembrane pores (in vitro). Causes lysis of E.coli. Exhibits antimicrobial activity against Gram-negative bacteria such as P.aeruginosa, S.typhimurium, E.aerogenes, E.coli and P.syringae, Gram-positive bacteria such as L.monocytogenes, S.epidermidis, S.pyogenes and S.aureus, as well as vancomycin-resistant enterococci (in vitro). Exhibits antimicrobial activity against methicillin-resistant S.aureus, P.mirabilis, and C.albicans in low-salt media, but not in media containing 100 mM NaCl (in vitro). Forms chiral supramolecular assemblies with quinolone signal (PQS) molecules of P.aeruginosa, which may lead to interference of bacterial quorum signaling and perturbance of bacterial biofilm formation. May form supramolecular fiber-like assemblies on bacterial membranes. Induces cytokine and chemokine producation as well as TNF/TNFA and CSF2/GMCSF production in normal human keratinocytes. Exhibits hemolytic activity against red blood cells. Functionally, exhibits antimicrobial activity against E.coli and B.megaterium (in vitro). The chain is Cathelicidin antimicrobial peptide from Cebus capucinus (White-faced sapajou).